Consider the following 371-residue polypeptide: DNA replication and repair protein RecF (371 aa).

ATP is bound at residue 30-37 (GQNGSGKT).

The protein belongs to the RecF family.

The protein resides in the cytoplasm. Functionally, the RecF protein is involved in DNA metabolism; it is required for DNA replication and normal SOS inducibility. RecF binds preferentially to single-stranded, linear DNA. It also seems to bind ATP. The chain is DNA replication and repair protein RecF from Chlorobium phaeovibrioides (strain DSM 265 / 1930) (Prosthecochloris vibrioformis (strain DSM 265)).